The primary structure comprises 250 residues: Proteasome subunit alpha (250 aa).

This sequence belongs to the peptidase T1A family. As to quaternary structure, the 20S proteasome core is composed of 14 alpha and 14 beta subunits that assemble into four stacked heptameric rings, resulting in a barrel-shaped structure. The two inner rings, each composed of seven catalytic beta subunits, are sandwiched by two outer rings, each composed of seven alpha subunits. The catalytic chamber with the active sites is on the inside of the barrel. Has a gated structure, the ends of the cylinder being occluded by the N-termini of the alpha-subunits. Is capped at one or both ends by the proteasome regulatory ATPase, PAN.

Its subcellular location is the cytoplasm. With respect to regulation, the formation of the proteasomal ATPase PAN-20S proteasome complex, via the docking of the C-termini of PAN into the intersubunit pockets in the alpha-rings, triggers opening of the gate for substrate entry. Interconversion between the open-gate and close-gate conformations leads to a dynamic regulation of the 20S proteasome proteolysis activity. Its function is as follows. Component of the proteasome core, a large protease complex with broad specificity involved in protein degradation. This chain is Proteasome subunit alpha, found in Methanobrevibacter smithii (strain ATCC 35061 / DSM 861 / OCM 144 / PS).